We begin with the raw amino-acid sequence, 431 residues long: Adenylosuccinate synthetase (431 aa).

Residues 13 to 19 (GDEGKGK) and 41 to 43 (GHT) contribute to the GTP site. D14 serves as the catalytic Proton acceptor. Residues D14 and G41 each contribute to the Mg(2+) site. IMP is bound by residues 14 to 17 (DEGK), 39 to 42 (NAGH), T130, R144, Q225, T240, and R304. H42 functions as the Proton donor in the catalytic mechanism. 300–306 (ATTGRKR) lines the substrate pocket. Residues R306, 332 to 334 (KLD), and 415 to 417 (STG) contribute to the GTP site.

The protein belongs to the adenylosuccinate synthetase family. In terms of assembly, homodimer. Mg(2+) is required as a cofactor.

It is found in the cytoplasm. It catalyses the reaction IMP + L-aspartate + GTP = N(6)-(1,2-dicarboxyethyl)-AMP + GDP + phosphate + 2 H(+). The protein operates within purine metabolism; AMP biosynthesis via de novo pathway; AMP from IMP: step 1/2. Functionally, plays an important role in the de novo pathway of purine nucleotide biosynthesis. Catalyzes the first committed step in the biosynthesis of AMP from IMP. The polypeptide is Adenylosuccinate synthetase (Shewanella halifaxensis (strain HAW-EB4)).